The sequence spans 58 residues: Large ribosomal subunit protein bL32c (58 aa).

Positions 1–23 (MAVPKKRTSKAKKNARKSVWKKK) are disordered.

It belongs to the bacterial ribosomal protein bL32 family.

Its subcellular location is the plastid. It is found in the chloroplast. The polypeptide is Large ribosomal subunit protein bL32c (rpl32-A) (Trieres chinensis (Marine centric diatom)).